We begin with the raw amino-acid sequence, 124 residues long: Large ribosomal subunit protein bL12 (124 aa).

It belongs to the bacterial ribosomal protein bL12 family. As to quaternary structure, homodimer. Part of the ribosomal stalk of the 50S ribosomal subunit. Forms a multimeric L10(L12)X complex, where L10 forms an elongated spine to which 2 to 4 L12 dimers bind in a sequential fashion. Binds GTP-bound translation factors.

In terms of biological role, forms part of the ribosomal stalk which helps the ribosome interact with GTP-bound translation factors. Is thus essential for accurate translation. The protein is Large ribosomal subunit protein bL12 of Burkholderia cenocepacia (strain ATCC BAA-245 / DSM 16553 / LMG 16656 / NCTC 13227 / J2315 / CF5610) (Burkholderia cepacia (strain J2315)).